Consider the following 201-residue polypeptide: Recombination protein RecR (201 aa).

The C4-type zinc finger occupies 59 to 74 (CEICGNMDTENICRIC). Residues 82–177 (SIIAIVETVA…KISRLASGIP (96 aa)) enclose the Toprim domain.

The protein belongs to the RecR family.

Functionally, may play a role in DNA repair. It seems to be involved in an RecBC-independent recombinational process of DNA repair. It may act with RecF and RecO. The chain is Recombination protein RecR from Rickettsia peacockii (strain Rustic).